The primary structure comprises 188 residues: GTP-dependent dephospho-CoA kinase (188 aa).

GTP contacts are provided by aspartate 43, valine 44, aspartate 62, glutamate 121, and aspartate 144.

The protein belongs to the GTP-dependent DPCK family.

The catalysed reaction is 3'-dephospho-CoA + GTP = GDP + CoA + H(+). It functions in the pathway cofactor biosynthesis; coenzyme A biosynthesis. Functionally, catalyzes the GTP-dependent phosphorylation of the 3'-hydroxyl group of dephosphocoenzyme A to form coenzyme A (CoA). The protein is GTP-dependent dephospho-CoA kinase of Methanococcoides burtonii (strain DSM 6242 / NBRC 107633 / OCM 468 / ACE-M).